The primary structure comprises 236 residues: Large ribosomal subunit protein uL3 (236 aa).

The protein belongs to the universal ribosomal protein uL3 family. In terms of assembly, part of the 50S ribosomal subunit. Forms a cluster with proteins L14 and L19.

Functionally, one of the primary rRNA binding proteins, it binds directly near the 3'-end of the 23S rRNA, where it nucleates assembly of the 50S subunit. This Anaeromyxobacter dehalogenans (strain 2CP-C) protein is Large ribosomal subunit protein uL3.